The primary structure comprises 628 residues: Otolith matrix protein OMM-64 (628 aa).

The N-terminal stretch at 1–20 (MLSRLLIVPLIFALAGLAIS) is a signal peptide. A disordered region spans residues 43 to 628 (KGDKDGGGLT…AAATALAAQS (586 aa)). A compositionally biased stretch (low complexity) spans 78–93 (DSSPDTTDTPDASSSD). Residues 182–214 (TESPGSDSAESPGSDSAESPGSDSTESPGSDST) are compositionally biased toward polar residues. Composition is skewed to basic and acidic residues over residues 246–266 (ETDK…ATDK), 276–285 (ELDGKAHAED), and 311–343 (RPEK…RDSA). An N-linked (GlcNAc...) asparagine glycan is attached at asparagine 318. Composition is skewed to acidic residues over residues 449-462 (DSQE…EAEP), 477-489 (EPQE…DTDD), 514-536 (DKED…MDKD), 544-556 (DSVD…DAEP), and 565-578 (DEID…PDSE). A compositionally biased stretch (low complexity) spans 613-628 (ASQAADAAATALAAQS).

In terms of tissue distribution, specifically expressed in otolith matrix-producing cells.

It localises to the secreted. Its subcellular location is the extracellular space. It is found in the extracellular matrix. In terms of biological role, calcium-binding component of otoliths, a calcium carbonate structure of the inner ear involved in hearing and balance sensing. Binds calcium. This chain is Otolith matrix protein OMM-64, found in Oncorhynchus mykiss (Rainbow trout).